An 88-amino-acid polypeptide reads, in one-letter code: Small ribosomal subunit protein bS20 (88 aa).

The tract at residues 1–27 (MANSKSAKKRALQSEKRRQHNASRRSM) is disordered.

It belongs to the bacterial ribosomal protein bS20 family.

Functionally, binds directly to 16S ribosomal RNA. In Shewanella oneidensis (strain ATCC 700550 / JCM 31522 / CIP 106686 / LMG 19005 / NCIMB 14063 / MR-1), this protein is Small ribosomal subunit protein bS20.